The chain runs to 497 residues: Glycerol kinase (497 aa).

Threonine 13 is an ADP binding site. The ATP site is built by threonine 13, threonine 14, and serine 15. Threonine 13 contacts sn-glycerol 3-phosphate. ADP is bound at residue arginine 17. Positions 83, 84, and 135 each coordinate sn-glycerol 3-phosphate. Glycerol-binding residues include arginine 83, glutamate 84, and tyrosine 135. Residue histidine 231 is modified to Phosphohistidine; by HPr. Aspartate 245 is a sn-glycerol 3-phosphate binding site. Residues aspartate 245 and glutamine 246 each coordinate glycerol. Residues threonine 267 and glycine 310 each coordinate ADP. ATP contacts are provided by threonine 267, glycine 310, glutamine 314, and glycine 411. Residues glycine 411 and asparagine 415 each coordinate ADP.

This sequence belongs to the FGGY kinase family. As to quaternary structure, homotetramer and homodimer (in equilibrium). In terms of processing, the phosphoenolpyruvate-dependent sugar phosphotransferase system (PTS), including enzyme I, and histidine-containing protein (HPr) are required for the phosphorylation, which leads to the activation of the enzyme.

It carries out the reaction glycerol + ATP = sn-glycerol 3-phosphate + ADP + H(+). It participates in polyol metabolism; glycerol degradation via glycerol kinase pathway; sn-glycerol 3-phosphate from glycerol: step 1/1. Its activity is regulated as follows. Activated by phosphorylation and inhibited by fructose 1,6-bisphosphate (FBP). Functionally, key enzyme in the regulation of glycerol uptake and metabolism. Catalyzes the phosphorylation of glycerol to yield sn-glycerol 3-phosphate. The polypeptide is Glycerol kinase (Listeria welshimeri serovar 6b (strain ATCC 35897 / DSM 20650 / CCUG 15529 / CIP 8149 / NCTC 11857 / SLCC 5334 / V8)).